We begin with the raw amino-acid sequence, 181 residues long: ADP-ribosylation factor 3 (181 aa).

Gly2 is lipidated: N-myristoyl glycine. Residues 24-31 (GLDAAGKT), 67-71 (DVGGQ), and 126-129 (NKQD) contribute to the GTP site.

It belongs to the small GTPase superfamily. Arf family. As to quaternary structure, interacts with PRKCABP. Interacts with PI4KB and NCS1/FREQ at the Golgi complex.

The protein localises to the golgi apparatus. It is found in the cytoplasm. The protein resides in the perinuclear region. In terms of biological role, GTP-binding protein that functions as an allosteric activator of the cholera toxin catalytic subunit, an ADP-ribosyltransferase. Involved in protein trafficking; may modulate vesicle budding and uncoating within the Golgi apparatus. In Bos taurus (Bovine), this protein is ADP-ribosylation factor 3 (ARF3).